A 197-amino-acid polypeptide reads, in one-letter code: Holliday junction branch migration complex subunit RuvA (197 aa).

The domain I stretch occupies residues 1 to 64; that stretch reads MYEYIKGKYI…EDFIGVYGFL (64 aa). Residues 65–143 are domain II; sequence TKDELSMFKL…IDILEEDDEQ (79 aa). Residues 144–148 form a flexible linker region; the sequence is TINKV. The interval 149 to 197 is domain III; the sequence is TDDKKVLEAVAALITLGYSEKEANKVINSCDKNNSLEQIIKEALKYLMK.

It belongs to the RuvA family. Homotetramer. Forms an RuvA(8)-RuvB(12)-Holliday junction (HJ) complex. HJ DNA is sandwiched between 2 RuvA tetramers; dsDNA enters through RuvA and exits via RuvB. An RuvB hexamer assembles on each DNA strand where it exits the tetramer. Each RuvB hexamer is contacted by two RuvA subunits (via domain III) on 2 adjacent RuvB subunits; this complex drives branch migration. In the full resolvosome a probable DNA-RuvA(4)-RuvB(12)-RuvC(2) complex forms which resolves the HJ.

The protein localises to the cytoplasm. Functionally, the RuvA-RuvB-RuvC complex processes Holliday junction (HJ) DNA during genetic recombination and DNA repair, while the RuvA-RuvB complex plays an important role in the rescue of blocked DNA replication forks via replication fork reversal (RFR). RuvA specifically binds to HJ cruciform DNA, conferring on it an open structure. The RuvB hexamer acts as an ATP-dependent pump, pulling dsDNA into and through the RuvAB complex. HJ branch migration allows RuvC to scan DNA until it finds its consensus sequence, where it cleaves and resolves the cruciform DNA. This is Holliday junction branch migration complex subunit RuvA from Clostridium botulinum (strain 657 / Type Ba4).